The chain runs to 396 residues: Bone morphogenetic protein 2 (396 aa).

The N-terminal stretch at 1 to 23 (MVAGTRCLLALLLPQVLLGGAAG) is a signal peptide. Residues 24 to 282 (LIPELGRRKF…GHPLHRREKR (259 aa)) constitute a propeptide, cleaved by PCSK5. At Ser87 the chain carries Phosphoserine. Asn135, Asn163, Asn164, and Asn200 each carry an N-linked (GlcNAc...) asparagine glycan. A disordered region spans residues 272–293 (KGHPLHRREKRQAKHKQRKRLK). A compositionally biased stretch (basic residues) spans 274–293 (HPLHRREKRQAKHKQRKRLK). 3 disulfides stabilise this stretch: Cys296-Cys361, Cys325-Cys393, and Cys329-Cys395. Residue Asn338 is glycosylated (N-linked (GlcNAc...) asparagine).

This sequence belongs to the TGF-beta family. Homodimer; disulfide-linked. Interacts with SOSTDC1. Interacts with GREM2, RGMA, RGMB and RGMC. Interacts with ASPN. Interacts with MAFP5. Interacts with FBN1 (via N-terminal domain) and FBN2. Interacts with type I receptor BMPR1A. Interacts with type II receptor BMPR2. Interacts with ERFE. Interacts with BMPR1A/ALK3; the interaction may induce HAMP expression. Interacts with TGFBR3.

It localises to the secreted. Functionally, growth factor of the TGF-beta superfamily that plays essential roles in many developmental processes, including cardiogenesis, neurogenesis, and osteogenesis. Induces cartilage and bone formation. Initiates the canonical BMP signaling cascade by associating with type I receptor BMPR1A and type II receptor BMPR2. Once all three components are bound together in a complex at the cell surface, BMPR2 phosphorylates and activates BMPR1A. In turn, BMPR1A propagates signal by phosphorylating SMAD1/5/8 that travel to the nucleus and act as activators and repressors of transcription of target genes. Also acts to promote expression of HAMP, via the interaction with its receptor BMPR1A/ALK3. Can also signal through non-canonical pathways such as ERK/MAP kinase signaling cascade that regulates osteoblast differentiation. Also stimulates the differentiation of myoblasts into osteoblasts via the EIF2AK3-EIF2A-ATF4 pathway by stimulating EIF2A phosphorylation which leads to increased expression of ATF4 which plays a central role in osteoblast differentiation. Acts as a positive regulator of odontoblast differentiation during mesenchymal tooth germ formation, expression is repressed during the bell stage by MSX1-mediated inhibition of CTNNB1 signaling. In Dama dama (Fallow deer), this protein is Bone morphogenetic protein 2 (BMP2).